The following is a 420-amino-acid chain: UDP-N-acetylglucosamine 1-carboxyvinyltransferase (420 aa).

22–23 (KN) is a phosphoenolpyruvate binding site. Arginine 91 contributes to the UDP-N-acetyl-alpha-D-glucosamine binding site. The active-site Proton donor is cysteine 115. Position 115 is a 2-(S-cysteinyl)pyruvic acid O-phosphothioketal (cysteine 115). UDP-N-acetyl-alpha-D-glucosamine is bound by residues 120 to 124 (RPVDL), 160 to 163 (KVSV), aspartate 305, and isoleucine 327.

This sequence belongs to the EPSP synthase family. MurA subfamily.

It localises to the cytoplasm. The enzyme catalyses phosphoenolpyruvate + UDP-N-acetyl-alpha-D-glucosamine = UDP-N-acetyl-3-O-(1-carboxyvinyl)-alpha-D-glucosamine + phosphate. Its pathway is cell wall biogenesis; peptidoglycan biosynthesis. Cell wall formation. Adds enolpyruvyl to UDP-N-acetylglucosamine. This Pectobacterium carotovorum subsp. carotovorum (strain PC1) protein is UDP-N-acetylglucosamine 1-carboxyvinyltransferase.